Here is a 417-residue protein sequence, read N- to C-terminus: Serine hydroxymethyltransferase (417 aa).

(6S)-5,6,7,8-tetrahydrofolate contacts are provided by residues Leu-120 and 124-126; that span reads GHL. Residue Lys-229 is modified to N6-(pyridoxal phosphate)lysine.

This sequence belongs to the SHMT family. In terms of assembly, homodimer. It depends on pyridoxal 5'-phosphate as a cofactor.

It localises to the cytoplasm. It carries out the reaction (6R)-5,10-methylene-5,6,7,8-tetrahydrofolate + glycine + H2O = (6S)-5,6,7,8-tetrahydrofolate + L-serine. Its pathway is one-carbon metabolism; tetrahydrofolate interconversion. It participates in amino-acid biosynthesis; glycine biosynthesis; glycine from L-serine: step 1/1. Its function is as follows. Catalyzes the reversible interconversion of serine and glycine with tetrahydrofolate (THF) serving as the one-carbon carrier. This reaction serves as the major source of one-carbon groups required for the biosynthesis of purines, thymidylate, methionine, and other important biomolecules. Also exhibits THF-independent aldolase activity toward beta-hydroxyamino acids, producing glycine and aldehydes, via a retro-aldol mechanism. This is Serine hydroxymethyltransferase from Anaeromyxobacter dehalogenans (strain 2CP-1 / ATCC BAA-258).